We begin with the raw amino-acid sequence, 43 residues long: Protein PsbN (43 aa).

The chain crosses the membrane as a helical span at residues 7-27 (VAIFISCLLVSFTGYALYTAF).

This sequence belongs to the PsbN family.

The protein resides in the plastid. Its subcellular location is the chloroplast thylakoid membrane. Functionally, may play a role in photosystem I and II biogenesis. This chain is Protein PsbN, found in Huperzia lucidula (Shining clubmoss).